We begin with the raw amino-acid sequence, 483 residues long: Regulatory protein ViaA (483 aa).

Belongs to the ViaA family. As to quaternary structure, homodimer. Interacts with RavA.

Its subcellular location is the cytoplasm. Functionally, component of the RavA-ViaA chaperone complex, which may act on the membrane to optimize the function of some of the respiratory chains. ViaA stimulates the ATPase activity of RavA. The polypeptide is Regulatory protein ViaA (Salmonella schwarzengrund (strain CVM19633)).